Here is a 147-residue protein sequence, read N- to C-terminus: uncharacterized protein (147 aa).

Low complexity predominate over residues 72–81 (ARAKPASRAP). The disordered stretch occupies residues 72–147 (ARAKPASRAP…QGAAGRRLSP (76 aa)).

This is an uncharacterized protein from Homo sapiens (Human).